The sequence spans 135 residues: Ribosome-binding factor A (135 aa).

It belongs to the RbfA family. Monomer. Binds 30S ribosomal subunits, but not 50S ribosomal subunits or 70S ribosomes.

The protein resides in the cytoplasm. Its function is as follows. One of several proteins that assist in the late maturation steps of the functional core of the 30S ribosomal subunit. Associates with free 30S ribosomal subunits (but not with 30S subunits that are part of 70S ribosomes or polysomes). Required for efficient processing of 16S rRNA. May interact with the 5'-terminal helix region of 16S rRNA. The protein is Ribosome-binding factor A of Bartonella henselae (strain ATCC 49882 / DSM 28221 / CCUG 30454 / Houston 1) (Rochalimaea henselae).